Consider the following 861-residue polypeptide: MANDQEMSGWTDLLHSSSKLLEQAAPSSQFPPLQRNLDQLEALSKKLKAKTLRNEAPSQSIAATRLLAREGINAEQLARDLKSFELKTTFEDVFPAEATSVEEYLQQVHEMAMVSAIQEAQKDNVRSFNDYMMKVLEEDWRKEKRDFLQSLSRISMLPKTNMIDTSREAHAGQLVPVGSSPRVSSTPGKELVALANIPIHEKKAYVYGEVVKKLNTSRERGMPFRPAMCFKDAYDTLGAEVTRGKSVNMQKIWQLVQAITGEDSAVRQGVSKRMALAIGARHHLQHGHEKFIMDTIQTHPTQAALGGSVGNLQRIRAFLRIRLRDYGVLDFDSTDARRQPPVDTTWQQIYFCLRTGYYEEAREIARSTRSSQQFAPLLTEWITTDGMVAAESAAIASEECEKMLRMGDRLGRTAYDKKKLLLYTIISGSRRQIERILRDLSTLFNTIEDFLWFKLSCIRDVTGGSSSVVLNDGLAPYSLDDLQAYLNKFEPSYYTKNGKDPLVYPYVLLLSVQLLPAIMHLSKEAGDGGYNIDAVHIAISLVDHSVLSEGSGTGHKLSVMDSNAEASSMIRQYGSMFLHHGDLQMTVEYYAQAAATVGGGQLAWSGRSNVDQQRQRNLMLKQLLTEILLRERGIYFLLGARGSGEEGQLGRFFPDSRLRQQFLVEAAHQCQEAGLYDKSIELQKRVGAFSAALETINKCLSEAICSLARGRLDGESRTSGLILAGNDILETYKYYPEVSLQERERVMEQETILRELEAILSIHKLGRLGNHLDALREIAKLPFLHLDPRMPDATADVFQSASPYFQTCVPDLLKVALTCLDNVPDTDGSIRAMRSKIAGFLASNTHRNWPRDLYEKVARSF.

This sequence belongs to the nucleoporin interacting component (NIC) family. In terms of assembly, part of the nuclear pore complex (NPC). The NPC has an eight-fold symmetrical structure comprising a central transport channel and two rings, the cytoplasmic and nuclear rings, to which eight filaments are attached. The cytoplasmic filaments have loose ends, while the nuclear filaments are joined in a distal ring, forming a nuclear basket. NPCs are highly dynamic in configuration and composition, and can be devided in 3 subcomplexes, the NUP62 subcomplex, the NUP107-160 subcomplex and the NUP93 subcomplex, containing approximately 30 different nucleoporin proteins.

Its subcellular location is the nucleus envelope. The protein localises to the nucleus. It localises to the nuclear pore complex. The protein is Nuclear pore complex protein NUP93A of Arabidopsis thaliana (Mouse-ear cress).